A 419-amino-acid polypeptide reads, in one-letter code: Endochitinase 2 (419 aa).

An N-terminal signal peptide occupies residues 1 to 18; that stretch reads MHHLRALVGVGLAGLAAG. Residues 35 to 343 enclose the GH18 domain; that stretch reads AQNVVYWGQN…QQAKSILVNG (309 aa). N-linked (GlcNAc...) asparagine glycosylation occurs at asparagine 153. Glutamate 173 functions as the Proton donor in the catalytic mechanism. N-linked (GlcNAc...) asparagine glycans are attached at residues asparagine 237 and asparagine 256. Positions 343–390 are disordered; the sequence is GAPCPSSGPPSSTPATAPAPTATTMPSSTSVSSPTASPTGGTVPQWGQ. Over residues 355–384 the composition is skewed to low complexity; sequence TPATAPAPTATTMPSSTSVSSPTASPTGGT. One can recognise a CBM1 domain in the interval 383–419; sequence GTVPQWGQCGGEGYSGPTQCVPPYQCVKQGDWWSSCR.

Belongs to the glycosyl hydrolase 18 family. Chitinase class III subfamily.

It localises to the secreted. The catalysed reaction is Random endo-hydrolysis of N-acetyl-beta-D-glucosaminide (1-&gt;4)-beta-linkages in chitin and chitodextrins.. Secreted chitinase involved in the degradation of chitin, a component of the cell walls of fungi and exoskeletal elements of some animals (including worms and arthropods). Participates in the infection process and directly acts in the penetration process of the host cuticle. The polypeptide is Endochitinase 2 (chi2) (Metarhizium anisopliae (Entomophthora anisopliae)).